The sequence spans 312 residues: Transcription initiation factor IIB (312 aa).

A TFIIB-type zinc finger spans residues 10 to 42 (FVQTCSDCGETQNIVEDYKNGYHVCGRCGCIVG). Zn(2+) is bound by residues cysteine 14, cysteine 17, cysteine 34, and cysteine 37. A run of 2 repeats spans residues 120-196 (FCER…LISP) and 213-290 (FCSD…ELLT).

Belongs to the TFIIB family. In terms of assembly, associates with TFIID-IIA (DA complex) to form TFIID-IIA-IIB (DAB-complex) which is then recognized by polymerase II.

It localises to the nucleus. In terms of biological role, general factor that plays a major role in the activation of eukaryotic genes transcribed by RNA polymerase II. The sequence is that of Transcription initiation factor IIB from Encephalitozoon cuniculi (strain GB-M1) (Microsporidian parasite).